The primary structure comprises 141 residues: Sec-independent protein translocase protein TatB (141 aa).

A helical transmembrane segment spans residues 2 to 22; that stretch reads FANVGWGEMLVLVIAGLVILG. The segment at 92–141 is disordered; it reads IFTGRFDSTSSDQPGSGKPPKPQSGPGPAAASGPAATTTPASTPFDPDAT. Positions 117–141 are enriched in low complexity; sequence PGPAAASGPAATTTPASTPFDPDAT.

Belongs to the TatB family. In terms of assembly, the Tat system comprises two distinct complexes: a TatABC complex, containing multiple copies of TatA, TatB and TatC subunits, and a separate TatA complex, containing only TatA subunits. Substrates initially bind to the TatABC complex, which probably triggers association of the separate TatA complex to form the active translocon.

Its subcellular location is the cell membrane. Functionally, part of the twin-arginine translocation (Tat) system that transports large folded proteins containing a characteristic twin-arginine motif in their signal peptide across membranes. Together with TatC, TatB is part of a receptor directly interacting with Tat signal peptides. TatB may form an oligomeric binding site that transiently accommodates folded Tat precursor proteins before their translocation. This is Sec-independent protein translocase protein TatB from Mycolicibacterium gilvum (strain PYR-GCK) (Mycobacterium gilvum (strain PYR-GCK)).